Reading from the N-terminus, the 176-residue chain is Non-specific lipid transfer protein GPI-anchored 12 (176 aa).

The first 20 residues, 1-20 (MLTTNTLAVLLLLFLSLCSG), serve as a signal peptide directing secretion. 4 disulfide bridges follow: cysteine 40–cysteine 83, cysteine 50–cysteine 67, cysteine 68–cysteine 110, and cysteine 81–cysteine 120. N-linked (GlcNAc...) asparagine glycosylation is present at asparagine 46. Residue asparagine 149 is the site of GPI-anchor amidated asparagine attachment. The propeptide at 150–176 (GAMTTKYCGVALNSLALLLLFTFLSLS) is removed in mature form.

It belongs to the plant LTP family. In terms of tissue distribution, preferentially expressed in the endodermis of hypocotyls and roots of seedlings, and in petals and anthers of inflorescences. May also be expressed in siliques, carpels and pedicels.

The protein resides in the cell membrane. Its function is as follows. Probable lipid transfer protein. The sequence is that of Non-specific lipid transfer protein GPI-anchored 12 from Arabidopsis thaliana (Mouse-ear cress).